The sequence spans 439 residues: 23S rRNA (uracil(1939)-C(5))-methyltransferase RlmD (439 aa).

The TRAM domain maps to 10–69 (KTQLNTRHQAVQVERLDHHGAGIAYLKKKPLFIDGALPGEEVVTQLVEEKSKFARGKLIK). Residues Cys82, Cys88, Cys91, and Cys169 each contribute to the [4Fe-4S] cluster site. Residues Gln272, Phe301, Asn306, Glu322, Asn349, and Asp370 each coordinate S-adenosyl-L-methionine. The active-site Nucleophile is Cys396.

The protein belongs to the class I-like SAM-binding methyltransferase superfamily. RNA M5U methyltransferase family. RlmD subfamily.

It carries out the reaction uridine(1939) in 23S rRNA + S-adenosyl-L-methionine = 5-methyluridine(1939) in 23S rRNA + S-adenosyl-L-homocysteine + H(+). Its function is as follows. Catalyzes the formation of 5-methyl-uridine at position 1939 (m5U1939) in 23S rRNA. In Vibrio parahaemolyticus serotype O3:K6 (strain RIMD 2210633), this protein is 23S rRNA (uracil(1939)-C(5))-methyltransferase RlmD.